The primary structure comprises 415 residues: NADH-quinone oxidoreductase subunit D (415 aa).

It belongs to the complex I 49 kDa subunit family. NDH-1 is composed of 14 different subunits. Subunits NuoB, C, D, E, F, and G constitute the peripheral sector of the complex.

Its subcellular location is the cell inner membrane. The catalysed reaction is a quinone + NADH + 5 H(+)(in) = a quinol + NAD(+) + 4 H(+)(out). Functionally, NDH-1 shuttles electrons from NADH, via FMN and iron-sulfur (Fe-S) centers, to quinones in the respiratory chain. The immediate electron acceptor for the enzyme in this species is believed to be ubiquinone. Couples the redox reaction to proton translocation (for every two electrons transferred, four hydrogen ions are translocated across the cytoplasmic membrane), and thus conserves the redox energy in a proton gradient. The protein is NADH-quinone oxidoreductase subunit D of Myxococcus xanthus (strain DK1622).